A 499-amino-acid polypeptide reads, in one-letter code: Probable malate:quinone oxidoreductase 4 (499 aa).

It belongs to the MQO family. The cofactor is FAD.

The catalysed reaction is (S)-malate + a quinone = a quinol + oxaloacetate. The protein operates within carbohydrate metabolism; tricarboxylic acid cycle; oxaloacetate from (S)-malate (quinone route): step 1/1. The sequence is that of Probable malate:quinone oxidoreductase 4 from Staphylococcus epidermidis (strain ATCC 12228 / FDA PCI 1200).